The sequence spans 267 residues: Diphthine--ammonia ligase (267 aa).

Tyrosine 97 bears the Phosphotyrosine mark.

It belongs to the Diphthine--ammonia ligase family.

The enzyme catalyses diphthine-[translation elongation factor 2] + NH4(+) + ATP = diphthamide-[translation elongation factor 2] + AMP + diphosphate + H(+). It participates in protein modification; peptidyl-diphthamide biosynthesis. In terms of biological role, amidase that catalyzes the last step of diphthamide biosynthesis using ammonium and ATP. Diphthamide biosynthesis consists in the conversion of an L-histidine residue in the translation elongation factor eEF-2 (EEF2) to diphthamide. The protein is Diphthine--ammonia ligase (DPH6) of Bos taurus (Bovine).